A 116-amino-acid polypeptide reads, in one-letter code: Ferredoxin (116 aa).

2 4Fe-4S ferredoxin-type domains span residues 2-31 (TYVV…EGER) and 35-64 (FMLV…PESP). [3Fe-4S] cluster-binding residues include Cys-9 and Cys-17. Positions 21, 44, 47, and 50 each coordinate [4Fe-4S] cluster. Cys-54 contributes to the [3Fe-4S] cluster binding site.

It depends on [4Fe-4S] cluster as a cofactor. The cofactor is [3Fe-4S] cluster.

In terms of biological role, ferredoxins are iron-sulfur proteins that transfer electrons in a wide variety of metabolic reactions. This chain is Ferredoxin (fdxA), found in Rickettsia conorii (strain ATCC VR-613 / Malish 7).